The sequence spans 50 residues: Defensin-like protein 1 (50 aa).

Cystine bridges form between cysteine 3-cysteine 50, cysteine 14-cysteine 35, cysteine 20-cysteine 44, and cysteine 24-cysteine 46.

This sequence belongs to the DEFL family.

It is found in the secreted. Functionally, possesses antimicrobial activity sensitive to inorganic cations. Has no inhibitory effect on insect gut alpha-amylase. Induces potential changes in fungal membranes and increased K+ efflux and Ca(2+) uptake. Interacts with sphingolipids and ergosterols found in fungal plasma membranes. The sequence is that of Defensin-like protein 1 from Dahlia merckii (Bedding dahlia).